Consider the following 545-residue polypeptide: E3 ubiquitin-protein ligase ipaH9.8 (545 aa).

Positions 1 to 242 (MLPINNNFSL…YHGPRIYFSM (242 aa)) are interaction with target proteins. LRR repeat units lie at residues 57-77 (NSDE…NLPA), 78-99 (QITL…PVTL), 100-117 (KKLY…VLPP), 118-139 (ALES…PDSL), 140-157 (LTMN…SLPQ), 158-179 (ALKN…SEGN), 182-203 (VVRE…ILNL), and 205-228 (NECS…QRLT). The tract at residues 243–250 (SDGQQNTL) is linker. The E3 ubiquitin-protein ligase catalytic domain stretch occupies residues 251-545 (HRPLADAVTA…SENGSQLHHS (295 aa)). An NEL domain is found at 253 to 545 (PLADAVTAWF…SENGSQLHHS (293 aa)). C337 functions as the Glycyl thioester intermediate in the catalytic mechanism.

This sequence belongs to the LRR-containing bacterial E3 ligase family. In terms of assembly, also interacts with human and mouse U2AF1 (U2AF35). Ubiquitinated in the presence of host E1 ubiquitin-activating enzyme, E2 ubiquitin-conjugating enzyme and ubiquitin.

It is found in the secreted. Its subcellular location is the host cytoplasm. It localises to the host nucleus. It catalyses the reaction S-ubiquitinyl-[E2 ubiquitin-conjugating enzyme]-L-cysteine + [acceptor protein]-L-lysine = [E2 ubiquitin-conjugating enzyme]-L-cysteine + N(6)-ubiquitinyl-[acceptor protein]-L-lysine.. Exists in an autoinhibited state in the absence of substrate protein, due to interactions of the leucine-rich repeats with NEL domain. Is activated upon binding to a substrate protein. Its function is as follows. Effector E3 ubiquitin ligase that interferes with host's ubiquitination pathway and modulates the acute inflammatory responses, thus facilitating bacterial colonization within the host cell. Interacts with IKBKG (NEMO) and TNIP1 (ABIN-1), a ubiquitin-binding adapter protein, which results in TNIP1-dependent 'Lys-27'-linked polyubiquitination of IKBKG. Consequently, polyubiquitinated IKBKG undergoes proteasome-dependent degradation, which perturbs NF-kappa-B activation during bacterial infection. Mediates polyubiquitination of host U2AF1, leading to its proteasomal degradation. Catalyzes 'Lys-48'-linked polyubiquitination and subsequent degradation of a subset of host guanylate-binding proteins (GBP1, GBP2, GBP4 and GBP6), thereby suppressing host cell defense. In contrast, host GBP3 and GBP7 are not ubiquitinated by IpaH9.8. Uses UBE2D2 (UBCH5B) as an E2 ubiquitin-conjugating enzyme. In Shigella dysenteriae serotype 1 (strain Sd197), this protein is E3 ubiquitin-protein ligase ipaH9.8 (ipaH9.8).